The primary structure comprises 247 residues: Uridylate kinase (247 aa).

18-21 (KLSG) contacts ATP. G60 contributes to the UMP binding site. ATP contacts are provided by G61 and R65. Residues D80 and 141 to 148 (TGNPFFTT) each bind UMP. ATP contacts are provided by T168, Y174, and D177.

The protein belongs to the UMP kinase family. In terms of assembly, homohexamer.

Its subcellular location is the cytoplasm. It catalyses the reaction UMP + ATP = UDP + ADP. Its pathway is pyrimidine metabolism; CTP biosynthesis via de novo pathway; UDP from UMP (UMPK route): step 1/1. Its activity is regulated as follows. Inhibited by UTP. In terms of biological role, catalyzes the reversible phosphorylation of UMP to UDP. This Stutzerimonas stutzeri (strain A1501) (Pseudomonas stutzeri) protein is Uridylate kinase.